Consider the following 518-residue polypeptide: Protein nucleotidyltransferase YdiU (518 aa).

The span at 1–10 (MTHLQFDNRL) shows a compositional bias: basic and acidic residues. A disordered region spans residues 1–23 (MTHLQFDNRLRAQLPGDPEQGPR). Residues Gly-100, Gly-102, Arg-103, Lys-123, Asp-135, Gly-136, Arg-193, and Arg-200 each coordinate ATP. Residue Asp-270 is the Proton acceptor of the active site. The Mg(2+) site is built by Asn-271 and Asp-280. Asp-280 lines the ATP pocket.

It belongs to the SELO family. It depends on Mg(2+) as a cofactor. The cofactor is Mn(2+).

It catalyses the reaction L-seryl-[protein] + ATP = 3-O-(5'-adenylyl)-L-seryl-[protein] + diphosphate. The catalysed reaction is L-threonyl-[protein] + ATP = 3-O-(5'-adenylyl)-L-threonyl-[protein] + diphosphate. It carries out the reaction L-tyrosyl-[protein] + ATP = O-(5'-adenylyl)-L-tyrosyl-[protein] + diphosphate. The enzyme catalyses L-histidyl-[protein] + UTP = N(tele)-(5'-uridylyl)-L-histidyl-[protein] + diphosphate. It catalyses the reaction L-seryl-[protein] + UTP = O-(5'-uridylyl)-L-seryl-[protein] + diphosphate. The catalysed reaction is L-tyrosyl-[protein] + UTP = O-(5'-uridylyl)-L-tyrosyl-[protein] + diphosphate. Functionally, nucleotidyltransferase involved in the post-translational modification of proteins. It can catalyze the addition of adenosine monophosphate (AMP) or uridine monophosphate (UMP) to a protein, resulting in modifications known as AMPylation and UMPylation. This Xanthomonas campestris pv. campestris (strain B100) protein is Protein nucleotidyltransferase YdiU.